Consider the following 927-residue polypeptide: Altered inheritance of mitochondria protein 3 (927 aa).

Residues 22–33 (IGTGTKALGKAG) are compositionally biased toward low complexity. Residues 22–671 (IGTGTKALGK…AAAPPIESGP (650 aa)) form a disordered region. The segment covering 41–60 (QGERRGVPDNEADKAERSSY) has biased composition (basic and acidic residues). 3 stretches are compositionally biased toward low complexity: residues 67–93 (NTSAYSGAYSGSNTGSNTGSNSGTSYY), 123–193 (HQDQ…QPQP), and 206–222 (TQAGTQPQFQPQLQQYQ). Polar residues predominate over residues 223–232 (NGHIQQSHPA). Residues 233-275 (ETQQPTYQVEQQQQSYSTEPQQQLQQPIFQPQPQSQDPYQQSP) show a composition bias toward low complexity. Polar residues-rich tracts occupy residues 290–303 (SQLQNTQQEPTQVD) and 383–395 (ETTLNSASSNVRQ). Composition is skewed to low complexity over residues 401-417 (TRQSSNTTQNQLQTTST) and 424-440 (SNTASVNSTSSQASSLP). A compositionally biased stretch (polar residues) spans 469–478 (QLTSDGSSRN). The segment covering 479–488 (AEPDTLKQEP) has biased composition (basic and acidic residues). The span at 503-517 (KNTNSSLSGKGNLNS) shows a compositional bias: low complexity. A compositionally biased stretch (pro residues) spans 558–568 (KPKIGPKPSIS). Positions 571 to 593 (PETKGKPIIKSKSEIKAKPDLKP) are enriched in basic and acidic residues. Residues 618 to 629 (DSPSNLHVNKSN) show a composition bias toward polar residues.

This sequence belongs to the AIM3 family.

It is found in the membrane raft. This is Altered inheritance of mitochondria protein 3 (AIM3) from Debaryomyces hansenii (strain ATCC 36239 / CBS 767 / BCRC 21394 / JCM 1990 / NBRC 0083 / IGC 2968) (Yeast).